Here is a 322-residue protein sequence, read N- to C-terminus: MTLHLKKVELHCHLEGAAPPELTAAQARKYGVDISGELRGGAYVWHDFASFLECYDKVSEVYRTEEDYARLTETYLDELAGINTIYSELIVSPDHGKRIGLGADAYISGICEGIRRAREKSGIEARLIVTGERHFGPESVIGAAEYAAKAGNPLITGFNLAGEERMGRVADYARAFDIARDAGLGLTIHAGEVCGAFSVADALDAVHPSRIGHGVRAVEDVDLVKRLADLGTVLEVCPGSNIALGVFPDFASHPLRRLKEAGVRVTISSDDPPFFHTSLAREYELAAEAFGFSDAEIDAMTRTAIEAAFVDEETRKALLARL.

Zn(2+) is bound by residues His-11, His-13, and His-189. Glu-192 serves as the catalytic Proton donor. Asp-270 is a binding site for Zn(2+). Asp-271 is a binding site for substrate.

It belongs to the metallo-dependent hydrolases superfamily. Adenosine and AMP deaminases family. Adenine deaminase type 2 subfamily. Zn(2+) serves as cofactor.

The enzyme catalyses adenine + H2O + H(+) = hypoxanthine + NH4(+). Functionally, catalyzes the hydrolytic deamination of adenine to hypoxanthine. Plays an important role in the purine salvage pathway and in nitrogen catabolism. This chain is Adenine deaminase, found in Rhizobium leguminosarum bv. trifolii (strain WSM2304).